We begin with the raw amino-acid sequence, 1073 residues long: Carbamoyl phosphate synthase large chain (1073 aa).

The tract at residues 2-403 is carboxyphosphate synthetic domain; that stretch reads PKRTDIKSIL…SLQKALRGLE (402 aa). Arg129, Arg169, Gly175, Gly176, Glu208, Leu210, Glu215, Gly241, Ile242, His243, Gln285, and Glu299 together coordinate ATP. One can recognise an ATP-grasp 1 domain in the interval 133–328; the sequence is DVAMKKIGLE…IAKVAAKLAV (196 aa). The Mg(2+) site is built by Gln285, Glu299, and Asn301. Residues Gln285, Glu299, and Asn301 each coordinate Mn(2+). Residues 404–553 form an oligomerization domain region; that stretch reads VGATGFDPKV…YSTYEEECEA (150 aa). The interval 554–936 is carbamoyl phosphate synthetic domain; the sequence is NPSTDREKIM…AFAKAQLGSN (383 aa). The 192-residue stretch at 679–870 folds into the ATP-grasp 2 domain; it reads QHAVERLKLK…LAKVAARVMA (192 aa). Residues Arg715, His754, Leu756, Glu761, Gly786, Val787, His788, Ser789, Gln829, and Glu841 each coordinate ATP. The Mg(2+) site is built by Gln829, Glu841, and Asn843. Residues Gln829, Glu841, and Asn843 each contribute to the Mn(2+) site. The region spanning 937-1073 is the MGS-like domain; it reads STMKKHGRAL…SVQEMHAQIK (137 aa). The segment at 937–1073 is allosteric domain; the sequence is STMKKHGRAL…SVQEMHAQIK (137 aa).

It belongs to the CarB family. In terms of assembly, composed of two chains; the small (or glutamine) chain promotes the hydrolysis of glutamine to ammonia, which is used by the large (or ammonia) chain to synthesize carbamoyl phosphate. Tetramer of heterodimers (alpha,beta)4. Mg(2+) serves as cofactor. Requires Mn(2+) as cofactor.

It catalyses the reaction hydrogencarbonate + L-glutamine + 2 ATP + H2O = carbamoyl phosphate + L-glutamate + 2 ADP + phosphate + 2 H(+). The catalysed reaction is hydrogencarbonate + NH4(+) + 2 ATP = carbamoyl phosphate + 2 ADP + phosphate + 2 H(+). It functions in the pathway amino-acid biosynthesis; L-arginine biosynthesis; carbamoyl phosphate from bicarbonate: step 1/1. It participates in pyrimidine metabolism; UMP biosynthesis via de novo pathway; (S)-dihydroorotate from bicarbonate: step 1/3. Large subunit of the glutamine-dependent carbamoyl phosphate synthetase (CPSase). CPSase catalyzes the formation of carbamoyl phosphate from the ammonia moiety of glutamine, carbonate, and phosphate donated by ATP, constituting the first step of 2 biosynthetic pathways, one leading to arginine and/or urea and the other to pyrimidine nucleotides. The large subunit (synthetase) binds the substrates ammonia (free or transferred from glutamine from the small subunit), hydrogencarbonate and ATP and carries out an ATP-coupled ligase reaction, activating hydrogencarbonate by forming carboxy phosphate which reacts with ammonia to form carbamoyl phosphate. This is Carbamoyl phosphate synthase large chain from Escherichia coli (strain K12).